We begin with the raw amino-acid sequence, 231 residues long: MAKAVVLLSGGLDSATAAAQAIADGYEAIALSFRYGQRHVRELEAARSVAAALGINQHFFVDVNIAQWGGSSLTDAAEPLPGSGVVAGEIPSTYVPGRNTVFIALALSLAEAQQASAIYLGINAVDYSGYPDCRPDYLAAFQQLASLSSKVGVEGQAPQLVAPLIHDHKVDIVRRAVVLGVPIPATWSCYAGGAEACGRCDSCRIRDRALIEAGYPEWATAIGRSLVSLQP.

Position 8–18 (8–18 (LSGGLDSATAA)) interacts with ATP. Positions 189, 197, 200, and 203 each coordinate Zn(2+).

It belongs to the QueC family. Zn(2+) is required as a cofactor.

It carries out the reaction 7-carboxy-7-deazaguanine + NH4(+) + ATP = 7-cyano-7-deazaguanine + ADP + phosphate + H2O + H(+). Its pathway is purine metabolism; 7-cyano-7-deazaguanine biosynthesis. Functionally, catalyzes the ATP-dependent conversion of 7-carboxy-7-deazaguanine (CDG) to 7-cyano-7-deazaguanine (preQ(0)). The polypeptide is 7-cyano-7-deazaguanine synthase (Synechococcus elongatus (strain ATCC 33912 / PCC 7942 / FACHB-805) (Anacystis nidulans R2)).